Consider the following 224-residue polypeptide: Glutathione S-transferase U4 (224 aa).

The GST N-terminal domain maps to Glu6 to Pro85. Glutathione is bound by residues Ser16–Pro17, Asn42–Lys43, Lys56–Val57, and Glu69–Ser70. The GST C-terminal domain maps to Asp90–Val217. The residue at position 151 (Thr151) is a Phosphothreonine.

Belongs to the GST superfamily. Tau family.

It localises to the cytoplasm. It is found in the cytosol. The enzyme catalyses RX + glutathione = an S-substituted glutathione + a halide anion + H(+). Its function is as follows. May be involved in the conjugation of reduced glutathione to a wide number of exogenous and endogenous hydrophobic electrophiles and have a detoxification role against certain herbicides. The polypeptide is Glutathione S-transferase U4 (GSTU4) (Arabidopsis thaliana (Mouse-ear cress)).